The chain runs to 168 residues: Photosystem I assembly protein Ycf3 (168 aa).

3 TPR repeats span residues 35 to 68 (AFAY…EMDP), 72 to 105 (SYIL…NPFL), and 120 to 153 (GEQA…TPDN).

The protein belongs to the Ycf3 family.

The protein resides in the plastid membrane. In terms of biological role, essential for the assembly of the photosystem I (PSI) complex. May act as a chaperone-like factor to guide the assembly of the PSI subunits. The chain is Photosystem I assembly protein Ycf3 from Cuscuta obtusiflora (Peruvian dodder).